The primary structure comprises 441 residues: UDP-N-acetylmuramoylalanine--D-glutamate ligase (441 aa).

Glycine 113–threonine 119 provides a ligand contact to ATP.

This sequence belongs to the MurCDEF family.

It localises to the cytoplasm. It catalyses the reaction UDP-N-acetyl-alpha-D-muramoyl-L-alanine + D-glutamate + ATP = UDP-N-acetyl-alpha-D-muramoyl-L-alanyl-D-glutamate + ADP + phosphate + H(+). It functions in the pathway cell wall biogenesis; peptidoglycan biosynthesis. In terms of biological role, cell wall formation. Catalyzes the addition of glutamate to the nucleotide precursor UDP-N-acetylmuramoyl-L-alanine (UMA). This Alcanivorax borkumensis (strain ATCC 700651 / DSM 11573 / NCIMB 13689 / SK2) protein is UDP-N-acetylmuramoylalanine--D-glutamate ligase.